The primary structure comprises 227 residues: MGRPLLLPLLLLLQPPAFLQPGGSTGSGPSYLYGVTQPKHLSASMGGSVEIPFSFYYPWELAIVPNVRISWRRGHFHGQSFYSTRPPSIHKDYVNRLFLNWTEGQESGFLRISNLRKEDQSVYFCRVELDTRRSGRQQLQSIKGTKLTITQAVTTTTTWRPSSTTTIAGLRVTESKGHSESWHLSLDTAIRVALAVAVLKTVILGLLCLLLLWWRRRKGSRAPSSDF.

Positions 1–19 are cleaved as a signal peptide; the sequence is MGRPLLLPLLLLLQPPAFL. Residues 20–191 are Extracellular-facing; sequence QPGGSTGSGP…WHLSLDTAIR (172 aa). Residues 21–143 enclose the Ig-like V-type domain; sequence PGGSTGSGPS…SGRQQLQSIK (123 aa). Asparagine 100 carries N-linked (GlcNAc...) asparagine glycosylation. The helical transmembrane segment at 192–212 threads the bilayer; it reads VALAVAVLKTVILGLLCLLLL. At 213-227 the chain is on the cytoplasmic side; it reads WWRRRKGSRAPSSDF.

The protein localises to the membrane. Functionally, paired receptors consist of highly related activating and inhibitory receptors and are widely involved in the regulation of the immune system. PILRB is thought to act as a cellular signaling activating receptor that associates with ITAM-bearing adapter molecules on the cell surface. The chain is Paired immunoglobulin-like type 2 receptor beta (PILRB) from Homo sapiens (Human).